A 303-amino-acid chain; its full sequence is Protoheme IX farnesyltransferase (303 aa).

The next 9 membrane-spanning stretches (helical) occupy residues 17–37, 42–62, 91–111, 114–134, 142–162, 168–188, 208–228, 231–251, and 270–290; these read GVVMLLMVTAVAGMFLATEPA, LATFIPAFVGLSLAMMASAAI, AAITFAVLLATASMIMLYFLV, LTAWLTLFGFVGYAFIYTLYL, IVIGGIAGAIPPLLGWTAVTG, AWLLVLIIFVWTPPHFWALAI, IPFTRESVLYYTILLFICTLL, LTGMSDLIYLLSALILGLVFL, and FGYSITYLFALFTALLVDHYL.

Belongs to the UbiA prenyltransferase family. Protoheme IX farnesyltransferase subfamily.

The protein localises to the cell inner membrane. The enzyme catalyses heme b + (2E,6E)-farnesyl diphosphate + H2O = Fe(II)-heme o + diphosphate. It functions in the pathway porphyrin-containing compound metabolism; heme O biosynthesis; heme O from protoheme: step 1/1. Functionally, converts heme B (protoheme IX) to heme O by substitution of the vinyl group on carbon 2 of heme B porphyrin ring with a hydroxyethyl farnesyl side group. This chain is Protoheme IX farnesyltransferase, found in Alcanivorax borkumensis (strain ATCC 700651 / DSM 11573 / NCIMB 13689 / SK2).